Consider the following 372-residue polypeptide: Cytochrome b (372 aa).

4 helical membrane-spanning segments follow: residues 25-45 (FGSM…FLAI), 69-90 (WIMQ…YIHI), 105-125 (WVSG…GYVL), and 170-190 (FFAL…IHVM). Heme b-binding residues include H75 and H89. Heme b-binding residues include H174 and H188. H193 is a binding site for a ubiquinone. Helical transmembrane passes span 218 to 238 (YKDT…TSFF), 280 to 300 (LGGT…PFTH), 312 to 332 (MAQV…WAAT), and 339 to 358 (FTTI…IINP).

It belongs to the cytochrome b family. In terms of assembly, the cytochrome bc1 complex contains 3 respiratory subunits (MT-CYB, CYC1 and UQCRFS1), 2 core proteins (UQCRC1 and UQCRC2) and probably 6 low-molecular weight proteins. Requires heme b as cofactor.

It is found in the mitochondrion inner membrane. Component of the ubiquinol-cytochrome c reductase complex (complex III or cytochrome b-c1 complex) that is part of the mitochondrial respiratory chain. The b-c1 complex mediates electron transfer from ubiquinol to cytochrome c. Contributes to the generation of a proton gradient across the mitochondrial membrane that is then used for ATP synthesis. The sequence is that of Cytochrome b (MT-CYB) from Heterodon simus (Southern hognose snake).